The sequence spans 158 residues: Peptide deformylase (158 aa).

Fe cation contacts are provided by cysteine 88 and histidine 130. Glutamate 131 is a catalytic residue. Histidine 134 contributes to the Fe cation binding site.

Belongs to the polypeptide deformylase family. It depends on Fe(2+) as a cofactor.

The enzyme catalyses N-terminal N-formyl-L-methionyl-[peptide] + H2O = N-terminal L-methionyl-[peptide] + formate. Its function is as follows. Removes the formyl group from the N-terminal Met of newly synthesized proteins. Requires at least a dipeptide for an efficient rate of reaction. N-terminal L-methionine is a prerequisite for activity but the enzyme has broad specificity at other positions. In Agathobacter rectalis (strain ATCC 33656 / DSM 3377 / JCM 17463 / KCTC 5835 / VPI 0990) (Eubacterium rectale), this protein is Peptide deformylase.